The chain runs to 201 residues: Small ribosomal subunit protein uS4 (201 aa).

Residues phenylalanine 26–lysine 45 are disordered. In terms of domain architecture, S4 RNA-binding spans serine 93–glutamine 153.

This sequence belongs to the universal ribosomal protein uS4 family. Part of the 30S ribosomal subunit. Contacts protein S5. The interaction surface between S4 and S5 is involved in control of translational fidelity.

In terms of biological role, one of the primary rRNA binding proteins, it binds directly to 16S rRNA where it nucleates assembly of the body of the 30S subunit. Its function is as follows. With S5 and S12 plays an important role in translational accuracy. This Christiangramia forsetii (strain DSM 17595 / CGMCC 1.15422 / KT0803) (Gramella forsetii) protein is Small ribosomal subunit protein uS4.